The primary structure comprises 237 residues: Phosphoribosylaminoimidazole-succinocarboxamide synthase (237 aa).

This sequence belongs to the SAICAR synthetase family.

It catalyses the reaction 5-amino-1-(5-phospho-D-ribosyl)imidazole-4-carboxylate + L-aspartate + ATP = (2S)-2-[5-amino-1-(5-phospho-beta-D-ribosyl)imidazole-4-carboxamido]succinate + ADP + phosphate + 2 H(+). The protein operates within purine metabolism; IMP biosynthesis via de novo pathway; 5-amino-1-(5-phospho-D-ribosyl)imidazole-4-carboxamide from 5-amino-1-(5-phospho-D-ribosyl)imidazole-4-carboxylate: step 1/2. The protein is Phosphoribosylaminoimidazole-succinocarboxamide synthase of Salmonella arizonae (strain ATCC BAA-731 / CDC346-86 / RSK2980).